Here is a 267-residue protein sequence, read N- to C-terminus: Putative [LysW]-aminoadipate/[LysW]-glutamate kinase (267 aa).

Substrate-binding positions include 37–38 (GG), R64, and N169.

This sequence belongs to the acetylglutamate kinase family. LysZ subfamily.

The protein resides in the cytoplasm. The enzyme catalyses [amino-group carrier protein]-C-terminal-N-(1,4-dicarboxybutan-1-yl)-L-glutamine + ATP = [amino-group carrier protein]-C-terminal-N-(1-carboxy-5-phosphooxy-5-oxopentan-1-yl)-L-glutamine + ADP. It carries out the reaction [amino-group carrier protein]-C-terminal-gamma-(L-glutamyl)-L-glutamate + ATP = [amino-group carrier protein]-C-terminal-gamma-(5-phospho-L-glutamyl)-L-glutamate + ADP. It participates in amino-acid biosynthesis; L-lysine biosynthesis via AAA pathway; L-lysine from L-alpha-aminoadipate (Thermus route): step 2/5. The protein operates within amino-acid biosynthesis; L-arginine biosynthesis. In terms of biological role, involved in both the arginine and lysine biosynthetic pathways. Phosphorylates the LysW-bound precursors glutamate (for arginine biosynthesis), respectively alpha-aminoadipate (for lysine biosynthesis). The sequence is that of Putative [LysW]-aminoadipate/[LysW]-glutamate kinase from Nitrosopumilus maritimus (strain SCM1).